A 212-amino-acid chain; its full sequence is Pyridoxine/pyridoxamine 5'-phosphate oxidase (212 aa).

Residues 8-11 and Lys-66 contribute to the substrate site; that span reads RREY. Residues 61–66, 76–77, Arg-82, Lys-83, and Gln-105 each bind FMN; these read RIVLLK and FT. The substrate site is built by Tyr-123, Arg-127, and Ser-131. FMN contacts are provided by residues 140 to 141 and Trp-185; that span reads QS. 191–193 contributes to the substrate binding site; the sequence is RLH. Arg-195 lines the FMN pocket.

The protein belongs to the pyridoxamine 5'-phosphate oxidase family. In terms of assembly, homodimer. FMN is required as a cofactor.

It catalyses the reaction pyridoxamine 5'-phosphate + O2 + H2O = pyridoxal 5'-phosphate + H2O2 + NH4(+). The catalysed reaction is pyridoxine 5'-phosphate + O2 = pyridoxal 5'-phosphate + H2O2. It functions in the pathway cofactor metabolism; pyridoxal 5'-phosphate salvage; pyridoxal 5'-phosphate from pyridoxamine 5'-phosphate: step 1/1. The protein operates within cofactor metabolism; pyridoxal 5'-phosphate salvage; pyridoxal 5'-phosphate from pyridoxine 5'-phosphate: step 1/1. In terms of biological role, catalyzes the oxidation of either pyridoxine 5'-phosphate (PNP) or pyridoxamine 5'-phosphate (PMP) into pyridoxal 5'-phosphate (PLP). The polypeptide is Pyridoxine/pyridoxamine 5'-phosphate oxidase (Shewanella amazonensis (strain ATCC BAA-1098 / SB2B)).